Reading from the N-terminus, the 85-residue chain is MKEGIHPTYRKVLFHDTSVNKYFLIGSTLQTDRTMKWEDGKEYPYMTLDISSESHPFYTGEQRVVSTEGRVANFNRRFGALKGKV.

Belongs to the bacterial ribosomal protein bL31 family. Type B subfamily. As to quaternary structure, part of the 50S ribosomal subunit.

This is Large ribosomal subunit protein bL31B from Aliivibrio salmonicida (strain LFI1238) (Vibrio salmonicida (strain LFI1238)).